Here is a 507-residue protein sequence, read N- to C-terminus: Glucose-6-phosphate isomerase (507 aa).

The active-site Proton donor is glutamate 337. Active-site residues include histidine 368 and lysine 478.

Belongs to the GPI family.

It is found in the cytoplasm. The catalysed reaction is alpha-D-glucose 6-phosphate = beta-D-fructose 6-phosphate. The protein operates within carbohydrate biosynthesis; gluconeogenesis. Its pathway is carbohydrate degradation; glycolysis; D-glyceraldehyde 3-phosphate and glycerone phosphate from D-glucose: step 2/4. Catalyzes the reversible isomerization of glucose-6-phosphate to fructose-6-phosphate. In Novosphingobium aromaticivorans (strain ATCC 700278 / DSM 12444 / CCUG 56034 / CIP 105152 / NBRC 16084 / F199), this protein is Glucose-6-phosphate isomerase.